The primary structure comprises 513 residues: 2-isopropylmalate synthase (513 aa).

A Pyruvate carboxyltransferase domain is found at 4-268; it reads IKIFDTTLRD…ETGIKTELIY (265 aa). Positions 13, 203, 205, and 239 each coordinate Mn(2+). The segment at 392 to 513 is regulatory domain; that stretch reads KLVHFHVHTG…GLLRKNGGAE (122 aa).

The protein belongs to the alpha-IPM synthase/homocitrate synthase family. LeuA type 1 subfamily. In terms of assembly, homodimer. The cofactor is Mn(2+).

It localises to the cytoplasm. The catalysed reaction is 3-methyl-2-oxobutanoate + acetyl-CoA + H2O = (2S)-2-isopropylmalate + CoA + H(+). Its pathway is amino-acid biosynthesis; L-leucine biosynthesis; L-leucine from 3-methyl-2-oxobutanoate: step 1/4. Catalyzes the condensation of the acetyl group of acetyl-CoA with 3-methyl-2-oxobutanoate (2-ketoisovalerate) to form 3-carboxy-3-hydroxy-4-methylpentanoate (2-isopropylmalate). The polypeptide is 2-isopropylmalate synthase (Thermotoga petrophila (strain ATCC BAA-488 / DSM 13995 / JCM 10881 / RKU-1)).